Reading from the N-terminus, the 326-residue chain is Triacylglycerol lipase 2 (326 aa).

The short motif at 142-146 (AHSMG) is the (A/G)XSXG lipase motif element.

In terms of assembly, interacts with MIA40; forms mixed disulfide intermediates with MIA40.

Its subcellular location is the mitochondrion. The protein localises to the mitochondrion intermembrane space. It catalyses the reaction a triacylglycerol + H2O = a diacylglycerol + a fatty acid + H(+). The enzyme catalyses 1,2,3-tri-(9Z-octadecenoyl)-glycerol + H2O = di-(9Z)-octadecenoylglycerol + (9Z)-octadecenoate + H(+). It carries out the reaction 1,2,3-tributanoylglycerol + H2O = dibutanoylglycerol + butanoate + H(+). The catalysed reaction is 1,2,3-trioctanoylglycerol + H2O = dioctanoylglycerol + octanoate + H(+). It catalyses the reaction di-(9Z)-octadecenoylglycerol + H2O = (9Z-octadecenoyl)-glycerol + (9Z)-octadecenoate + H(+). The enzyme catalyses dioctanoylglycerol + H2O = octanoylglycerol + octanoate + H(+). Functionally, mitochondrial triacylglycerol (TAG) lipase with activity toward long-chain diacylglycerols (DAGs) and triacylglycerols (TAGs). Involved in mitochondrial lipid metabolism. The sequence is that of Triacylglycerol lipase 2 (TGL2) from Saccharomyces cerevisiae (strain ATCC 204508 / S288c) (Baker's yeast).